The following is a 346-amino-acid chain: Protein Rae1 (346 aa).

WD repeat units follow at residues 17 to 61 (ASPP…ATVP), 64 to 105 (MKTM…VMQV), 126 to 148 (LMTG…PMMT), and 255 to 289 (VNDI…KLKS).

It belongs to the WD repeat rae1 family. In terms of assembly, interacts with hiw; the interaction with Rae1 may protect hiw from autophagy-mediated degradation. Interacts with Nup98-96. Head (at protein level).

The protein resides in the cytoplasm. It is found in the perinuclear region. Its subcellular location is the nucleus. It localises to the nucleus envelope. The protein localises to the chromosome. Its function is as follows. Probable component of the nuclear pore complex (NPC) which regulates the nuclear export of specific mRNAs and promotes cell cycle progression during mitosis and male meiosis. Acts with Nup98-96 to promote the nuclear export of specific mRNAs such as Moe, however it does not appear to be required for general nuclear mRNA transport. Essential mitotic and male meiotic cell cycle regulator with roles in many aspects of the cell cycle including chromatin organization and condensation, spindle assembly, chromosome segregation, and maintaining nuclear structure. During male meiosis it is required for completion of meiosis I, as well as accurate cytokinesis of the secondary spermatocytes, and postmeiotic differentiation of spermatids. Acts as a downstream regulatory target of the Hippo/SWH (Sav/Wts/Hpo) signaling pathway to promote mitotic cell cycle progression and proliferation during wing and eye development, and thereby plays a key role in integrating the regulation of proliferation with organ size control. When the Hippo/SWH signaling pathway is inactive, Rae1 acts independently of yki to increase organ size by promoting mitotic S-phase entry and increase cellular proliferation. When the Hippo/SWH signaling pathway is active it inhibits the activity of Rae1 in a Wts-dependent manner to restrict organ growth. However, Rae1 is also able to negatively regulate the levels and activity of yki likely by activating the core kinases of the Hippo/SWH signaling pathway hpo and Wts and increasing the protein levels of hpo, Mer and Wts; it is therefore likely that it functions as part of a negative feedback loop with the Hippo/SWH signaling pathway to regulate pathway homeostasis and prevent organ overgrowth. Promotes mitotic cell cycle progression, at least in part, by increasing the accumulation of mitotic cyclins such as CycB, possibly by directly up-regulating cyclin transcripts or by inhibiting the anaphase promoting complex/cyclosome (APC/C) activator fzy. Also required in presynaptic, postmitotic motor neurons to restrain synaptic terminal growth. Promotes the expression and stability of the an E3 ubiquitin ligase of hiw, and is likely to function in the regulation of synaptic growth by binding to hiw and protecting it from autophagy-mediated degradation. This chain is Protein Rae1, found in Drosophila melanogaster (Fruit fly).